A 434-amino-acid polypeptide reads, in one-letter code: Forkhead box protein A2 (434 aa).

Residues Lys149–Lys243 constitute a DNA-binding region (fork-head). A compositionally biased stretch (basic and acidic residues) spans Lys249–Ser262. Positions Lys249–Leu339 are disordered. Composition is skewed to low complexity over residues Glu263–Pro291 and Ala317–His333.

It localises to the nucleus. In terms of biological role, acts as a transcriptional activator during early development, limiting the extent of mesoderm formation in the gastrula. Binds to DNA via the target sequence 5'-GT[AC]AACA-3', with 5'-GTAAACA-3' being the preferred binding site. The sequence is that of Forkhead box protein A2 from Xenopus tropicalis (Western clawed frog).